The sequence spans 167 residues: Ubiquitin-like-conjugating enzyme ATG10 (167 aa).

Cysteine 133 acts as the Glycyl thioester intermediate in catalysis.

This sequence belongs to the ATG10 family. As to quaternary structure, forms homooligomers. Interacts with ATG7 and ATG12.

The protein localises to the preautophagosomal structure membrane. E2-like enzyme required for the cytoplasm to vacuole transport (Cvt), autophagy and nucleophagy. Acts as an E2-like enzyme that catalyzes the conjugation of ATG12 to ATG5. ATG12 conjugation to ATG5 is required for proper localization of ATG8 to the preautophagosomal structure (PAS). Likely serves as an ATG5-recognition molecule. The polypeptide is Ubiquitin-like-conjugating enzyme ATG10 (ATG10) (Saccharomyces cerevisiae (strain ATCC 204508 / S288c) (Baker's yeast)).